The following is a 571-amino-acid chain: Proline--tRNA ligase (571 aa).

The protein belongs to the class-II aminoacyl-tRNA synthetase family. ProS type 1 subfamily. In terms of assembly, homodimer.

The protein resides in the cytoplasm. The enzyme catalyses tRNA(Pro) + L-proline + ATP = L-prolyl-tRNA(Pro) + AMP + diphosphate. Catalyzes the attachment of proline to tRNA(Pro) in a two-step reaction: proline is first activated by ATP to form Pro-AMP and then transferred to the acceptor end of tRNA(Pro). As ProRS can inadvertently accommodate and process non-cognate amino acids such as alanine and cysteine, to avoid such errors it has two additional distinct editing activities against alanine. One activity is designated as 'pretransfer' editing and involves the tRNA(Pro)-independent hydrolysis of activated Ala-AMP. The other activity is designated 'posttransfer' editing and involves deacylation of mischarged Ala-tRNA(Pro). The misacylated Cys-tRNA(Pro) is not edited by ProRS. In Pseudomonas fluorescens (strain Pf0-1), this protein is Proline--tRNA ligase.